Reading from the N-terminus, the 218-residue chain is Albicidin resistance protein (218 aa).

The protein resides in the periplasm. Its function is as follows. Albicidin resistance protein binds to form a complex without antibiotic activity but without catalyzing any further chemical modifications to albicidin. The polypeptide is Albicidin resistance protein (Klebsiella oxytoca).